The following is a 203-amino-acid chain: VPS4-associated protein 1 (203 aa).

Over residues 99 to 109 (EKETNNSKDPD) the composition is skewed to basic and acidic residues. Disordered regions lie at residues 99-125 (EKET…AKND) and 171-193 (QVNR…EELL). Positions 110–120 (PTTTDSTDTSP) are enriched in low complexity. A coiled-coil region spans residues 121–157 (QAKNDAEILSETKKQYSKILDKVTELQRKNRKYELAK). Over residues 171 to 182 (QVNRERYLKEQE) the composition is skewed to basic and acidic residues.

In terms of assembly, interacts with VPS4.

It localises to the cytoplasm. It is found in the endosome. VPS4-associated protein involved in trafficking to the vacuole. This is VPS4-associated protein 1 (VFA1) from Saccharomyces cerevisiae (strain ATCC 204508 / S288c) (Baker's yeast).